Consider the following 425-residue polypeptide: Enolase 2 (425 aa).

Residue Gln-163 participates in (2R)-2-phosphoglycerate binding. Glu-205 (proton donor) is an active-site residue. Residues Asp-242, Glu-285, and Asp-312 each coordinate Mg(2+). Lys-337, Arg-366, Ser-367, and Lys-388 together coordinate (2R)-2-phosphoglycerate. The active-site Proton acceptor is Lys-337.

Belongs to the enolase family. The cofactor is Mg(2+).

The protein resides in the cytoplasm. It localises to the secreted. The protein localises to the cell surface. It carries out the reaction (2R)-2-phosphoglycerate = phosphoenolpyruvate + H2O. Its pathway is carbohydrate degradation; glycolysis; pyruvate from D-glyceraldehyde 3-phosphate: step 4/5. Catalyzes the reversible conversion of 2-phosphoglycerate (2-PG) into phosphoenolpyruvate (PEP). It is essential for the degradation of carbohydrates via glycolysis. This Cupriavidus metallidurans (strain ATCC 43123 / DSM 2839 / NBRC 102507 / CH34) (Ralstonia metallidurans) protein is Enolase 2.